The chain runs to 196 residues: tRNA(Phe) 7-((3-amino-3-carboxypropyl)-4-demethylwyosine(37)-N(4))-methyltransferase 1 (196 aa).

Belongs to the TYW3 family.

The catalysed reaction is 4-demethyl-7-[(3S)-3-amino-3-carboxypropyl]wyosine(37) in tRNA(Phe) + S-adenosyl-L-methionine = 7-[(3S)-3-amino-3-carboxypropyl]wyosine(37) in tRNA(Phe) + S-adenosyl-L-homocysteine + H(+). Functionally, S-adenosyl-L-methionine-dependent methyltransferase that acts as a component of the wyosine derivatives biosynthesis pathway. Probably methylates N-4 position of wybutosine-86 to produce wybutosine-72. This is tRNA(Phe) 7-((3-amino-3-carboxypropyl)-4-demethylwyosine(37)-N(4))-methyltransferase 1 from Pyrococcus furiosus (strain ATCC 43587 / DSM 3638 / JCM 8422 / Vc1).